A 591-amino-acid chain; its full sequence is L-fucose isomerase (591 aa).

Active-site proton acceptor residues include E337 and D361. E337, D361, and H528 together coordinate Mn(2+).

It belongs to the L-fucose isomerase family. As to quaternary structure, homohexamer. Mn(2+) serves as cofactor.

The protein localises to the cytoplasm. The catalysed reaction is L-fucose = L-fuculose. It functions in the pathway carbohydrate degradation; L-fucose degradation; L-lactaldehyde and glycerone phosphate from L-fucose: step 1/3. Functionally, converts the aldose L-fucose into the corresponding ketose L-fuculose. The protein is L-fucose isomerase of Citrobacter koseri (strain ATCC BAA-895 / CDC 4225-83 / SGSC4696).